A 178-amino-acid polypeptide reads, in one-letter code: MVHPWHDISPGDQNPEIVNGVIEIKRGSRAKYEVDKEYGILKLDRVLYSSFYYPANYGFIPQSYCGDQDPLDILVLSQVELEPLCLVKAKVIGVMRMLDSGEEDDKIIAVAANDMSVNHINDISELPPHFTLELKHFFEDYKKLENKTVVIEEFQNAILARKIVLDSLELYKKTFPKK.

Residues lysine 31, arginine 45, and tyrosine 57 each contribute to the substrate site. Mg(2+)-binding residues include aspartate 67, aspartate 72, and aspartate 104. Substrate is bound at residue tyrosine 141.

The protein belongs to the PPase family. Homohexamer. Mg(2+) is required as a cofactor.

It is found in the cytoplasm. It catalyses the reaction diphosphate + H2O = 2 phosphate + H(+). Functionally, catalyzes the hydrolysis of inorganic pyrophosphate (PPi) forming two phosphate ions. The polypeptide is Inorganic pyrophosphatase (Leptospira interrogans serogroup Icterohaemorrhagiae serovar copenhageni (strain Fiocruz L1-130)).